Consider the following 412-residue polypeptide: rRNA methyltransferase 1, mitochondrial (412 aa).

Residues 1 to 20 constitute a mitochondrion transit peptide; that stretch reads MTSLTNAVFKRYLAVTPSAH.

This sequence belongs to the class IV-like SAM-binding methyltransferase superfamily. RNA methyltransferase TrmH family.

The protein localises to the mitochondrion. It carries out the reaction guanosine(2270) in 21S rRNA + S-adenosyl-L-methionine = 2'-O-methylguanosine(2270) in 21S rRNA + S-adenosyl-L-homocysteine + H(+). Its function is as follows. S-adenosyl-L-methionine-dependent 2'-O-ribose methyltransferase that catalyzes the formation of 2'-O-methylguanosine at position 2270 (Gm2270) in the 21S mitochondrial large subunit ribosomal RNA (mtLSU rRNA), a universally conserved modification in the peptidyl transferase domain of the mtLSU rRNA. This modification seems to be important for the normal accumulation of the mitochondrial large ribosomal subunit. This Saccharomyces cerevisiae (strain ATCC 204508 / S288c) (Baker's yeast) protein is rRNA methyltransferase 1, mitochondrial.